Here is a 460-residue protein sequence, read N- to C-terminus: UDP-glycosyltransferase 91C1 (460 aa).

Residues Thr-283, 335-337 (VPQ), 352-360 (HCGWNSVVE), and 374-377 (LNEQ) each bind UDP-alpha-D-glucose.

It belongs to the UDP-glycosyltransferase family.

The polypeptide is UDP-glycosyltransferase 91C1 (UGT91C1) (Arabidopsis thaliana (Mouse-ear cress)).